Here is a 610-residue protein sequence, read N- to C-terminus: DNA mismatch repair protein MutL (610 aa).

It belongs to the DNA mismatch repair MutL/HexB family.

This protein is involved in the repair of mismatches in DNA. It is required for dam-dependent methyl-directed DNA mismatch repair. May act as a 'molecular matchmaker', a protein that promotes the formation of a stable complex between two or more DNA-binding proteins in an ATP-dependent manner without itself being part of a final effector complex. The sequence is that of DNA mismatch repair protein MutL from Rickettsia peacockii (strain Rustic).